Consider the following 202-residue polypeptide: Na(+)-translocating NADH-quinone reductase subunit E (202 aa).

Helical transmembrane passes span 11–31 (AVFV…FIAI), 35–55 (VETA…TVPA), 81–101 (FLGL…LEML), 114–134 (GVFL…LFMV), 144–164 (TVYG…LAGI), and 180–200 (LGIT…FSGV).

It belongs to the NqrDE/RnfAE family. Composed of six subunits; NqrA, NqrB, NqrC, NqrD, NqrE and NqrF.

The protein resides in the cell inner membrane. The catalysed reaction is a ubiquinone + n Na(+)(in) + NADH + H(+) = a ubiquinol + n Na(+)(out) + NAD(+). Functionally, NQR complex catalyzes the reduction of ubiquinone-1 to ubiquinol by two successive reactions, coupled with the transport of Na(+) ions from the cytoplasm to the periplasm. NqrA to NqrE are probably involved in the second step, the conversion of ubisemiquinone to ubiquinol. The sequence is that of Na(+)-translocating NADH-quinone reductase subunit E from Pseudomonas aeruginosa (strain LESB58).